The following is a 283-amino-acid chain: Pantothenate synthetase (283 aa).

31 to 38 (MGALHDGH) contacts ATP. The Proton donor role is filled by His38. A (R)-pantoate-binding site is contributed by Gln62. Gln62 serves as a coordination point for beta-alanine. 148–151 (GKKD) contacts ATP. Residue Gln154 coordinates (R)-pantoate. ATP-binding positions include Val177 and 185–188 (KSSR).

This sequence belongs to the pantothenate synthetase family. In terms of assembly, homodimer.

It is found in the cytoplasm. The catalysed reaction is (R)-pantoate + beta-alanine + ATP = (R)-pantothenate + AMP + diphosphate + H(+). The protein operates within cofactor biosynthesis; (R)-pantothenate biosynthesis; (R)-pantothenate from (R)-pantoate and beta-alanine: step 1/1. In terms of biological role, catalyzes the condensation of pantoate with beta-alanine in an ATP-dependent reaction via a pantoyl-adenylate intermediate. The protein is Pantothenate synthetase of Staphylococcus aureus (strain USA300).